We begin with the raw amino-acid sequence, 371 residues long: UDP-N-acetylglucosamine--N-acetylmuramyl-(pentapeptide) pyrophosphoryl-undecaprenol N-acetylglucosamine transferase (371 aa).

Residues 10 to 12 (TGG), asparagine 124, arginine 166, serine 196, and glutamine 301 each bind UDP-N-acetyl-alpha-D-glucosamine.

Belongs to the glycosyltransferase 28 family. MurG subfamily.

The protein localises to the cell membrane. The catalysed reaction is di-trans,octa-cis-undecaprenyl diphospho-N-acetyl-alpha-D-muramoyl-L-alanyl-D-glutamyl-meso-2,6-diaminopimeloyl-D-alanyl-D-alanine + UDP-N-acetyl-alpha-D-glucosamine = di-trans,octa-cis-undecaprenyl diphospho-[N-acetyl-alpha-D-glucosaminyl-(1-&gt;4)]-N-acetyl-alpha-D-muramoyl-L-alanyl-D-glutamyl-meso-2,6-diaminopimeloyl-D-alanyl-D-alanine + UDP + H(+). The protein operates within cell wall biogenesis; peptidoglycan biosynthesis. Cell wall formation. Catalyzes the transfer of a GlcNAc subunit on undecaprenyl-pyrophosphoryl-MurNAc-pentapeptide (lipid intermediate I) to form undecaprenyl-pyrophosphoryl-MurNAc-(pentapeptide)GlcNAc (lipid intermediate II). In Moorella thermoacetica (strain ATCC 39073 / JCM 9320), this protein is UDP-N-acetylglucosamine--N-acetylmuramyl-(pentapeptide) pyrophosphoryl-undecaprenol N-acetylglucosamine transferase.